The chain runs to 555 residues: Solute carrier family 22 member 2 (555 aa).

Over 1–21 the chain is Cytoplasmic; the sequence is MPTTVDDVLEHGGEFHFFQKQ. The helical transmembrane segment at 22 to 42 threads the bilayer; it reads MFFLLALLSATFTPIYVGIVF. The Extracellular portion of the chain corresponds to 43–150; sequence LGFTPDHRCR…LVCANSWMLD (108 aa). Residue Asn72 is glycosylated (N-linked (GlcNAc...) asparagine). The chain crosses the membrane as a helical span at residues 151-171; it reads LFQASVNVGFFFGSVSIGYIA. At 172–177 the chain is on the cytoplasmic side; the sequence is DRFGRK. The chain crosses the membrane as a helical span at residues 178-198; it reads LCLLTTVLINAAAGVLMAISP. The Extracellular segment spans residues 199 to 210; the sequence is TYTWMLIFRLIQ. Residues 211–231 traverse the membrane as a helical segment; the sequence is GLVSKAGWLIGYILITEFVGR. The Cytoplasmic portion of the chain corresponds to 232–238; that stretch reads RYRRTVG. The helical transmembrane segment at 239 to 259 threads the bilayer; it reads IFYQVAYTVGLLVLAGVAYAL. Residues 260–263 are Extracellular-facing; sequence PHWR. Residues 264–284 form a helical membrane-spanning segment; it reads WLQFTVTLPNFFFLLYYWCIP. Residues 284–288 carry the Proline-rich sequence motif; sequence PESPR. Residues 285–348 are Cytoplasmic-facing; that stretch reads ESPRWLISQN…VRTPQIRKHT (64 aa). A helical membrane pass occupies residues 349 to 369; that stretch reads MILMYNWFTSSVLYQGLIMHM. The Extracellular segment spans residues 370 to 375; the sequence is GLAGDN. Residues 376-396 form a helical membrane-spanning segment; that stretch reads IYLDFFYSALVEFPAAFMIIV. At 397–404 the chain is on the cytoplasmic side; sequence TIDRIGRR. The chain crosses the membrane as a helical span at residues 405-425; that stretch reads YPWAASNMVAGAACLASVFIP. The Extracellular portion of the chain corresponds to 426 to 432; sequence GDLQWLK. A helical transmembrane segment spans residues 433 to 453; the sequence is IIISCLGRMGITMAYEIVRLV. Topologically, residues 454–464 are cytoplasmic; that stretch reads NAELYPTFIRN. Residues 465–485 traverse the membrane as a helical segment; sequence LGVHICSSMCDIGGIITPFLV. Residues 486-494 are Extracellular-facing; the sequence is YRLTNIWLE. The chain crosses the membrane as a helical span at residues 495–515; that stretch reads LPLMVFGVLGLVAGGLVLLLP. Topologically, residues 516–555 are cytoplasmic; sequence ETKGKALPETIEEAENMQRPRKNKEKMIYLQVQKLDIPLN.

The protein belongs to the major facilitator (TC 2.A.1) superfamily. Organic cation transporter (TC 2.A.1.19) family. Post-translationally, tyrosine phosphorylated.

It is found in the basolateral cell membrane. Its subcellular location is the basal cell membrane. The protein resides in the apical cell membrane. The catalysed reaction is (R)-noradrenaline(out) = (R)-noradrenaline(in). It carries out the reaction (R)-adrenaline(out) = (R)-adrenaline(in). The enzyme catalyses serotonin(out) = serotonin(in). It catalyses the reaction dopamine(out) = dopamine(in). The catalysed reaction is histamine(out) = histamine(in). It carries out the reaction thiamine(in) = thiamine(out). The enzyme catalyses creatinine(in) = creatinine(out). It catalyses the reaction 1-methylnicotinamide(out) = 1-methylnicotinamide(in). The catalysed reaction is guanidine(out) = guanidine(in). It carries out the reaction choline(out) = choline(in). The enzyme catalyses agmatine(out) = agmatine(in). It catalyses the reaction putrescine(out) = putrescine(in). The catalysed reaction is spermidine(in) = spermidine(out). It carries out the reaction tyramine(in) = tyramine(out). The enzyme catalyses L-histidyl-L-proline diketopiperazine(in) = L-histidyl-L-proline diketopiperazine(out). It catalyses the reaction (R)-salsolinol(in) = (R)-salsolinol(out). The catalysed reaction is N-methyl-(R)-salsolinol(in) = N-methyl-(R)-salsolinol(out). It carries out the reaction acetylcholine(in) = acetylcholine(out). The enzyme catalyses prostaglandin F2alpha(out) = prostaglandin F2alpha(in). It catalyses the reaction prostaglandin E2(out) = prostaglandin E2(in). Tyrosine phosphorylation of the transporter leads to activation of the transport activity. Inhibited by cGMP, most likely through a cGMP-binding protein that interacts with OCT2. In terms of biological role, electrogenic voltage-dependent transporter that mediates the transport of a variety of organic cations such as endogenous bioactive amines, cationic drugs and xenobiotics. Functions as a Na(+)-independent, bidirectional uniporter. Cation cellular uptake or release is driven by the electrochemical potential, i.e. membrane potential and concentration gradient. However, may also engage electroneutral cation exchange when saturating concentrations of cation substrates are reached. Predominantly expressed at the basolateral membrane of hepatocytes and proximal tubules and involved in the uptake and disposition of cationic compounds by hepatic and renal clearance from the blood flow. Implicated in monoamine neurotransmitters uptake such as histamine, dopamine, adrenaline/epinephrine, noradrenaline/norepinephrine, serotonin and tyramine, thereby supporting a physiological role in the central nervous system by regulating interstitial concentrations of neurotransmitters. Also capable of transporting dopaminergic neuromodulators cyclo(his-pro), salsolinol and N-methyl-salsolinol, thereby involved in the maintenance of dopaminergic cell integrity in the central nervous system. Mediates the bidirectional transport of acetylcholine (ACh) at the apical membrane of ciliated cell in airway epithelium, thereby playing a role in luminal release of ACh from bronchial epithelium. Also transports guanidine and endogenous monoamines such as vitamin B1/thiamine, creatinine and N-1-methylnicotinamide (NMN). Mediates the uptake and efflux of quaternary ammonium compound choline. Mediates the bidirectional transport of polyamine agmatine and the uptake of polyamines putrescine and spermidine. Able to transport non-amine endogenous compounds such as prostaglandin E2 (PGE2) and prostaglandin F2-alpha (PGF2-alpha). Also involved in the uptake of xenobiotic 4-(4-(dimethylamino)styryl)-N-methylpyridinium (ASP). May contribute to regulate the transport of organic compounds in testis across the blood-testis-barrier. This is Solute carrier family 22 member 2 (SLC22A2) from Pongo abelii (Sumatran orangutan).